Here is a 2617-residue protein sequence, read N- to C-terminus: DNA-directed RNA polymerase subunit beta'' (2617 aa).

Positions 263, 334, 341, and 344 each coordinate Zn(2+).

It belongs to the RNA polymerase beta' chain family. RpoC2 subfamily. In terms of assembly, in plastids the minimal PEP RNA polymerase catalytic core is composed of four subunits: alpha, beta, beta', and beta''. When a (nuclear-encoded) sigma factor is associated with the core the holoenzyme is formed, which can initiate transcription. Requires Zn(2+) as cofactor.

The protein localises to the plastid. Its subcellular location is the chloroplast. It catalyses the reaction RNA(n) + a ribonucleoside 5'-triphosphate = RNA(n+1) + diphosphate. Functionally, DNA-dependent RNA polymerase catalyzes the transcription of DNA into RNA using the four ribonucleoside triphosphates as substrates. The polypeptide is DNA-directed RNA polymerase subunit beta'' (Oedogonium cardiacum (Filamentous green alga)).